We begin with the raw amino-acid sequence, 195 residues long: Capsid protein (195 aa).

Residues 148–195 are disordered; it reads NAPILSTLPETTVVRRRGRSPRRRTPSPRRRRSQSPRRRRSASPASQC. Residues 161 to 188 show a composition bias toward basic residues; that stretch reads VRRRGRSPRRRTPSPRRRRSQSPRRRRS. Residues serine 167, serine 174, and serine 182 each carry the phosphoserine; by host modification. The 1; half-length repeat unit spans residues 167–172; that stretch reads SPRRRT. A 3 X 7 AA repeats of S-P-R-R-R-[PR]-S region spans residues 167–188; that stretch reads SPRRRTPSPRRRRSQSPRRRRS. A Bipartite nuclear localization signal motif is present at residues 170-187; sequence RRTPSPRRRRSQSPRRRR. Tandem repeats lie at residues 174–180 and 182–188. The tract at residues 189 to 195 is RNA binding; sequence ASPASQC.

This sequence belongs to the orthohepadnavirus core antigen family. Homodimerizes, then multimerizes. Interacts with cytosol exposed regions of viral L glycoprotein present in the reticulum-to-Golgi compartment. Interacts with human FLNB. Phosphorylated form interacts with host importin alpha; this interaction depends on the exposure of the NLS, which itself depends upon genome maturation and/or phosphorylation of the capsid protein. Interacts with host NUP153. Post-translationally, phosphorylated by host SRPK1, SRPK2, and maybe protein kinase C or GAPDH. Phosphorylation is critical for pregenomic RNA packaging. Protein kinase C phosphorylation is stimulated by HBx protein and may play a role in transport of the viral genome to the nucleus at the late step during the viral replication cycle.

It localises to the virion. The protein localises to the host cytoplasm. Functionally, self assembles to form an icosahedral capsid. Most capsids appear to be large particles with an icosahedral symmetry of T=4 and consist of 240 copies of capsid protein, though a fraction forms smaller T=3 particles consisting of 180 capsid proteins. Entering capsids are transported along microtubules to the nucleus. Phosphorylation of the capsid is thought to induce exposure of nuclear localization signal in the C-terminal portion of the capsid protein that allows binding to the nuclear pore complex via the importin (karyopherin-) alpha and beta. Capsids are imported in intact form through the nuclear pore into the nuclear basket, where it probably binds NUP153. Only capsids that contain the mature viral genome can release the viral DNA and capsid protein into the nucleoplasm. Immature capsids get stuck in the basket. Capsids encapsulate the pre-genomic RNA and the P protein. Pre-genomic RNA is reverse-transcribed into DNA while the capsid is still in the cytoplasm. The capsid can then either be directed to the nucleus, providing more genomes for transcription, or bud through the endoplasmic reticulum to provide new virions. This Hepatitis B virus genotype G (isolate IG29227/2000) (HBV-G) protein is Capsid protein.